Reading from the N-terminus, the 148-residue chain is Hemoglobin subunit beta (148 aa).

The Globin domain maps to 3–148 (DWTDAERSAI…VVSALGRQYH (146 aa)). H64 and H93 together coordinate heme b.

This sequence belongs to the globin family. In terms of assembly, heterotetramer of two alpha chains and two beta chains. In terms of tissue distribution, red blood cells.

Its function is as follows. Involved in oxygen transport from gills to the various peripheral tissues. In Salmo salar (Atlantic salmon), this protein is Hemoglobin subunit beta (hbb).